The primary structure comprises 435 residues: Trigger factor (435 aa).

The region spanning 183-263 is the PPIase FKBP-type domain; it reads GDFINVDVTI…VKTIWQGNMP (81 aa).

The protein belongs to the FKBP-type PPIase family. Tig subfamily.

Its subcellular location is the cytoplasm. It carries out the reaction [protein]-peptidylproline (omega=180) = [protein]-peptidylproline (omega=0). Involved in protein export. Acts as a chaperone by maintaining the newly synthesized protein in an open conformation. Functions as a peptidyl-prolyl cis-trans isomerase. The polypeptide is Trigger factor (Protochlamydia amoebophila (strain UWE25)).